A 496-amino-acid chain; its full sequence is Lysine--tRNA ligase (496 aa).

2 residues coordinate Mg(2+): glutamate 409 and glutamate 416.

It belongs to the class-II aminoacyl-tRNA synthetase family. As to quaternary structure, homodimer. It depends on Mg(2+) as a cofactor.

Its subcellular location is the cytoplasm. The catalysed reaction is tRNA(Lys) + L-lysine + ATP = L-lysyl-tRNA(Lys) + AMP + diphosphate. The chain is Lysine--tRNA ligase from Streptococcus pneumoniae serotype 19F (strain G54).